We begin with the raw amino-acid sequence, 119 residues long: Thrombin-like enzyme TLBan (119 aa).

Residues 1-112 (VIGGDECNIN…YLLWIQSIIA (112 aa)) enclose the Peptidase S1 domain. Residues His40 and Asp59 each act as charge relay system in the active site. Cys54 and Cys118 are disulfide-bonded.

Monomer. Post-translationally, contains both N-linked carbohydrates and sialic acid. In terms of tissue distribution, expressed by the venom gland.

It is found in the secreted. Its activity is regulated as follows. Strongly inhibited by PMSF and slightly inhibited by EDTA and soybean trypsin inhibitor. Thrombin-like snake venom serine protease, with high clotting activity in vitro. Also has fibrinogenolytic ability, showing a fast degradation of fibrinogen Aalpha chain (FGA), a slow degradation of Bbeta chain (FGB) and no degradation of gamma chain. Also causes platelet aggregation in platelet rich plasma (PRP) and washed platelet suspension. The protein is Thrombin-like enzyme TLBan of Bothrocophias andianus (Andean lancehead).